Consider the following 181-residue polypeptide: Iron sulfur cluster assembly protein 1, mitochondrial (181 aa).

The tract at residues 159–181 (RKTKNPTLGAEAAETPAAATATA) is disordered. Positions 168–181 (AEAAETPAAATATA) are enriched in low complexity.

This sequence belongs to the NifU family. As to quaternary structure, component of the core Fe-S cluster (ISC) assembly machinery. [2Fe-2S] cluster serves as cofactor.

It is found in the mitochondrion matrix. Its pathway is cofactor biosynthesis; iron-sulfur cluster biosynthesis. In terms of biological role, scaffold protein for the de novo synthesis of iron-sulfur (Fe-S) clusters within mitochondria, which is required for maturation of both mitochondrial and cytoplasmic [2Fe-2S] and [4Fe-4S] proteins. First, a [2Fe-2S] cluster is transiently assembled on the scaffold protein ISU1. In a second step, the cluster is released from ISU1, transferred to a glutaredoxin, followed by the formation of mitochondrial [2Fe-2S] proteins, the synthesis of [4Fe-4S] clusters and their target-specific insertion into the recipient apoproteins. Cluster assembly on ISU1 depends on the function of the cysteine desulfurase complex NFS1-ISD11, which serves as the sulfur donor for cluster synthesis, the iron-binding protein frataxin as the putative iron donor, and the electron transfer chain comprised of ferredoxin reductase and ferredoxin, which receive their electrons from NADH. This chain is Iron sulfur cluster assembly protein 1, mitochondrial (ISU1), found in Yarrowia lipolytica (strain CLIB 122 / E 150) (Yeast).